The sequence spans 164 residues: Peroxynitrite isomerase (164 aa).

The GXWXGXG motif lies at 21–27 (GRWGGRG). The heme b site is built by Lys-130 and His-156.

It belongs to the nitrobindin family. In terms of assembly, homodimer. Requires heme b as cofactor.

It carries out the reaction peroxynitrite = nitrate. The protein operates within nitrogen metabolism. In terms of biological role, heme-binding protein able to scavenge peroxynitrite and to protect free L-tyrosine against peroxynitrite-mediated nitration, by acting as a peroxynitrite isomerase that converts peroxynitrite to nitrate. Therefore, this protein likely plays a role in peroxynitrite sensing and in the detoxification of reactive nitrogen and oxygen species (RNS and ROS, respectively). Is able to bind nitric oxide (NO) in vitro, but may act as a sensor of peroxynitrite levels in vivo. This chain is Peroxynitrite isomerase, found in Nocardioides sp. (strain ATCC BAA-499 / JS614).